Here is a 138-residue protein sequence, read N- to C-terminus: 1,4-dihydroxy-2-naphthoyl-CoA hydrolase (138 aa).

Residue D13 is part of the active site.

This sequence belongs to the 4-hydroxybenzoyl-CoA thioesterase family. DHNA-CoA hydrolase subfamily.

The enzyme catalyses 1,4-dihydroxy-2-naphthoyl-CoA + H2O = 1,4-dihydroxy-2-naphthoate + CoA + H(+). It functions in the pathway cofactor biosynthesis; phylloquinone biosynthesis. It participates in quinol/quinone metabolism; 1,4-dihydroxy-2-naphthoate biosynthesis; 1,4-dihydroxy-2-naphthoate from chorismate: step 7/7. Its function is as follows. Catalyzes the hydrolysis of 1,4-dihydroxy-2-naphthoyl-CoA (DHNA-CoA) to 1,4-dihydroxy-2-naphthoate (DHNA), a reaction involved in phylloquinone (vitamin K1) biosynthesis. The protein is 1,4-dihydroxy-2-naphthoyl-CoA hydrolase of Microcystis aeruginosa (strain NIES-843 / IAM M-2473).